A 110-amino-acid polypeptide reads, in one-letter code: T cell receptor alpha variable 35 (110 aa).

The N-terminal stretch at 1 to 19 is a signal peptide; sequence MLLEHLLIILWMQLTWVSG. In terms of domain architecture, Ig-like spans 20-110; that stretch reads QQLNQSPQSM…DVGIYFCAGQ (91 aa). N-linked (GlcNAc...) asparagine glycosylation is found at N40 and N93. C41 and C107 form a disulfide bridge.

Alpha-beta TR is a heterodimer composed of an alpha and beta chain; disulfide-linked. The alpha-beta TR is associated with the transmembrane signaling CD3 coreceptor proteins to form the TR-CD3 (TcR or TCR). The assembly of alpha-beta TR heterodimers with CD3 occurs in the endoplasmic reticulum where a single alpha-beta TR heterodimer associates with one CD3D-CD3E heterodimer, one CD3G-CD3E heterodimer and one CD247 homodimer forming a stable octameric structure. CD3D-CD3E and CD3G-CD3E heterodimers preferentially associate with TR alpha and TR beta chains, respectively. The association of the CD247 homodimer is the last step of TcR assembly in the endoplasmic reticulum and is required for transport to the cell surface.

The protein localises to the cell membrane. Functionally, v region of the variable domain of T cell receptor (TR) alpha chain that participates in the antigen recognition. Alpha-beta T cell receptors are antigen specific receptors which are essential to the immune response and are present on the cell surface of T lymphocytes. Recognize peptide-major histocompatibility (MH) (pMH) complexes that are displayed by antigen presenting cells (APC), a prerequisite for efficient T cell adaptive immunity against pathogens. Binding of alpha-beta TR to pMH complex initiates TR-CD3 clustering on the cell surface and intracellular activation of LCK that phosphorylates the ITAM motifs of CD3G, CD3D, CD3E and CD247 enabling the recruitment of ZAP70. In turn ZAP70 phosphorylates LAT, which recruits numerous signaling molecules to form the LAT signalosome. The LAT signalosome propagates signal branching to three major signaling pathways, the calcium, the mitogen-activated protein kinase (MAPK) kinase and the nuclear factor NF-kappa-B (NF-kB) pathways, leading to the mobilization of transcription factors that are critical for gene expression and essential for T cell growth and differentiation. The T cell repertoire is generated in the thymus, by V-(D)-J rearrangement. This repertoire is then shaped by intrathymic selection events to generate a peripheral T cell pool of self-MH restricted, non-autoaggressive T cells. Post-thymic interaction of alpha-beta TR with the pMH complexes shapes TR structural and functional avidity. The polypeptide is T cell receptor alpha variable 35 (Homo sapiens (Human)).